A 1154-amino-acid polypeptide reads, in one-letter code: PAN2-PAN3 deadenylation complex catalytic subunit pan2 (1154 aa).

WD repeat units follow at residues 20–59 (GLPT…RYTS), 102–145 (THDE…DKLR), and 276–315 (ATVS…HFNE). The segment at 316–451 (MSKEVEFADV…GARISGESED (136 aa)) is linker. The 370-residue stretch at 452-821 (DPLLKYSNVE…SPCVLAFQVR (370 aa)) folds into the USP domain. The Exonuclease domain maps to 870–1048 (VALDTEFVDL…IEDARMALRL (179 aa)). A divalent metal cation contacts are provided by aspartate 873, glutamate 875, aspartate 982, and aspartate 1041. The disordered stretch occupies residues 1092 to 1154 (PGTAVTMQNN…GEFFTGSPLK (63 aa)). 2 stretches are compositionally biased toward polar residues: residues 1096–1109 (VTMQ…TPST) and 1132–1141 (LTPSNGTFSG).

Belongs to the peptidase C19 family. PAN2 subfamily. As to quaternary structure, forms a heterotrimer with an asymmetric homodimer of the regulatory subunit pan3 to form the poly(A)-nuclease (PAN) deadenylation complex. A divalent metal cation serves as cofactor.

The protein localises to the cytoplasm. The catalysed reaction is Exonucleolytic cleavage of poly(A) to 5'-AMP.. With respect to regulation, positively regulated by the regulatory subunit pan3. Catalytic subunit of the poly(A)-nuclease (PAN) deadenylation complex, one of two cytoplasmic mRNA deadenylases involved in mRNA turnover. PAN specifically shortens poly(A) tails of RNA and the activity is stimulated by poly(A)-binding protein pab1. PAN deadenylation is followed by rapid degradation of the shortened mRNA tails by the CCR4-NOT complex. Deadenylated mRNAs are then degraded by two alternative mechanisms, namely exosome-mediated 3'-5' exonucleolytic degradation, or deadenylation-dependent mRNA decaping and subsequent 5'-3' exonucleolytic degradation by xrn1. May also be involved in post-transcriptional maturation of mRNA poly(A) tails. This chain is PAN2-PAN3 deadenylation complex catalytic subunit pan2, found in Emericella nidulans (strain FGSC A4 / ATCC 38163 / CBS 112.46 / NRRL 194 / M139) (Aspergillus nidulans).